Consider the following 1595-residue polypeptide: MTYIYNIYMSYSRGNLDRYIDQRLNRFYDQLISQRYAYSIPGIPGIKGDKGLTGSRIFLRNGIPQNELGTNGDLYINLLTDDLYFKNDSFWSLVGNLRGEKGEKGQLGIMGYKGEKGEIGSQGIKGMKGSDGLNGSTILFGQGLPRPYEGENGDVYIDKNTGIMYKKINGIWIPQVGLKGSQGDQGYKGDQGSKGDKGQKGEFGSAGFKGDKGDMGQKGETGAKGDKGDKGEGSKGSKGDVGNKGDKGNKGDKGIKGDKGSEGIKGDNGIKGDNGTKGDNGTKGDNGTKGDKGDIGDNGIKGDKGDIGDNGIKGDKGNKGDNGDKGNKGDKGDIGDKGMKGDKGDIGDKGDIGDKGMKGDKGDIGDKGMKGDNSTKGDKGDNGTKGDKGDNGIKGDKGDNGTKGDNGDNGTKGDKGDNGIKGDKGDKGTKGDKGDKGTKGDNGDKGTKGDNGIKGYKGDIGDKGIKGESGANADKGDKGIKGDKGDKGIKGDDGSKGDKGYNGEIGQKGDNGEKGDNGEKGDNGEKGDKGEKGDIGEKGDNGEKGDIGEKGNKGSKGDKGEIGSSILFGQGIPSPDLGNDGDIYIDDNTGILYKKLNGIWVPQTDIKGEKGDKGESGQSANKGDKGDKGNGGEIGNKGDKGSKGDIGDKGNKGDKGDGGIKGNKGDKGSKGDKGSKGDKGDKGDEGIKGDKGNKGDKGDKGDIGSQGIKGESGSAVFKGDKGTKGDKGNKGDKGNKGDKGTNGDKGNKGDKGSKGDKGTKGDKGIKGDKGDKGSKGNKGSKGDKGDKGDSGDKGDKGDKGSKGYKGDKGDKGSKGYKGDKGDKGIKGNTGSKGDKGSKGDKGEKGSKGNKGEKGEKGFKGEKGSKGEKGSKGNKGDKGDKGFKGDNGIKGNIGVKGDKGDSGIKGENGLKGDVGDKGIKGDKGNEGDKGDKGNKGEKGNRGDEGDKGIKGNKGDKGIKGSEGDKGIKGESGSKGDKGEKGNKGYKGDKGDKGNLGIKGDKGDKGIKGVKGTKGDKGTKGVKGTKGDKGDKGTNGDKGDKGIKGTNGDKGNKGLEGDKGNIGGKGDKGDKGDKGDKGDKGDKGVNGDKGSKGDKGDQGTKGETGLSIKGDKGDKGEFGLSIKGDKGVKGDQGYKGDKGDKGIKGDKGDKGIKGDQGIKGNKGDKGDKGNLGDKGDKGIKGDKGIKGDKGIKGDKGIKGDKGIKGDKGDKGIKGDKGDKGDKDDKGNKGDKGDKGDKGIKGDKGDKGDKGDQGDQGIKGESGASVFKGDKGDKGDKGDKGDKGDKGAKGDKGDKGDKGDQGIKGESGASVFKGDKGDTGSQGDKGIKGESGVSLNYVMSYYNATPGNFSSPVPVGASIAYVSTVGGGGGGSYFRRLNVGIVGGGGGGGGGALFRLPLSVMPGQSLSGVIGGPGLGAADSTTNATKGGDTIIYYGQYTFIAGGGNPGINSAADTASFIKGGDGGTVTNPLLTTQPTPGTGSTSTGSAGGNGQMSFYCFSGAGGGAGTSFTSSSGGNVGMFPGGNGVTTTYNNAGSGGGGASAFDKGGNGSIRFNPPSSGTKGSGGGGSVQGGGGTIPNDGYPGGNGGPGFVSIDYYSS.

Asparagine 87 and asparagine 134 each carry an N-linked (GlcNAc...) asparagine; by host glycan. Collagen-like domains lie at 97-155 (LRGE…NGDV), 175-233 (QVGL…KGEG), 236-295 (GSKG…KGDI), and 299-358 (GIKG…KGMK). The span at 181–190 (SQGDQGYKGD) shows a compositional bias: low complexity. Disordered regions lie at residues 181 to 577 (SQGD…SPDL) and 604 to 1326 (TDIK…GIKG). Composition is skewed to basic and acidic residues over residues 191–200 (QGSKGDKGQK), 209–448 (KGDK…KGTK), 456–466 (YKGDIGDKGIK), 474–501 (DKGDKGIKGDKGDKGIKGDDGSKGDKGY), 510–561 (DNGE…DKGE), 606–615 (IKGEKGDKGE), 622–702 (KGDK…DKGD), 718–825 (KGDK…DKGI), 832–883 (KGDK…KGFK), 895–1041 (KGDK…DKGI), 1048–1098 (KGNK…DQGT), 1107–1151 (KGDK…KGIK), 1159–1250 (NKGD…KGDQ), and 1265–1300 (KGDKGDKGDKGDKGDKGDKGAKGDKGDKGDKGDQGI). 3 N-linked (GlcNAc...) asparagine; by host glycosylation sites follow: asparagine 274, asparagine 280, and asparagine 286. 4 N-linked (GlcNAc...) asparagine; by host glycosylation sites follow: asparagine 373, asparagine 382, asparagine 400, and asparagine 409. Collagen-like domains follow at residues 380–559 (GDNG…KGDK), 608–907 (GEKG…KGEN), 920–1039 (GDKG…KGDK), 1043–1102 (GTNG…KGET), and 1128–1307 (GDQG…SGAS). N-linked (GlcNAc...) asparagine; by host glycosylation is found at asparagine 1345, asparagine 1420, and asparagine 1545. The disordered stretch occupies residues 1538-1585 (SAFDKGGNGSIRFNPPSSGTKGSGGGGSVQGGGGTIPNDGYPGGNGGP). Gly residues predominate over residues 1558–1585 (KGSGGGGSVQGGGGTIPNDGYPGGNGGP).

Post-translationally, may be hydroxylated on lysine by the viral-encoded procollagen-lysine,2-oxoglutarate 5-dioxygenase.

It is found in the virion. Its function is as follows. May participate in the formation of a layer of cross-linked glycosylated fibrils at the viral surface thus giving it a hairy-like appearance. This chain is Collagen-like protein 2, found in Acanthamoeba polyphaga (Amoeba).